The primary structure comprises 320 residues: Cytochrome c1-1, heme protein, mitochondrial (320 aa).

The transit peptide at M1 to S77 directs the protein to the mitochondrion. Residues D78–R280 are Mitochondrial intermembrane-facing. The Cytochrome c domain maps to A103–L210. C116, C119, H120, and M239 together coordinate heme c. Residues K281–Y301 traverse the membrane as a helical segment. Residues R302–N320 lie on the Mitochondrial matrix side of the membrane.

It belongs to the cytochrome c family. As to quaternary structure, component of the ubiquinol-cytochrome c oxidoreductase (cytochrome b-c1 complex, complex III, CIII), a multisubunit enzyme composed of 3 respiratory subunits cytochrome b, cytochrome c1 and Rieske protein, 2 core protein subunits, and additional low-molecular weight protein subunits. The complex exists as an obligatory dimer and forms supercomplexes (SCs) in the inner mitochondrial membrane with cytochrome c oxidase (complex IV, CIV). The cofactor is heme c. In terms of tissue distribution, in all tissues analyzed.

The protein resides in the mitochondrion inner membrane. It catalyses the reaction a quinol + 2 Fe(III)-[cytochrome c](out) = a quinone + 2 Fe(II)-[cytochrome c](out) + 2 H(+)(out). Functionally, component of the ubiquinol-cytochrome c oxidoreductase, a multisubunit transmembrane complex that is part of the mitochondrial electron transport chain which drives oxidative phosphorylation. The respiratory chain contains 3 multisubunit complexes succinate dehydrogenase (complex II, CII), ubiquinol-cytochrome c oxidoreductase (cytochrome b-c1 complex, complex III, CIII) and cytochrome c oxidase (complex IV, CIV), that cooperate to transfer electrons derived from NADH and succinate to molecular oxygen, creating an electrochemical gradient over the inner membrane that drives transmembrane transport and the ATP synthase. The cytochrome b-c1 complex catalyzes electron transfer from ubiquinol to cytochrome c, linking this redox reaction to translocation of protons across the mitochondrial inner membrane, with protons being carried across the membrane as hydrogens on the quinol. In the process called Q cycle, 2 protons are consumed from the matrix, 4 protons are released into the intermembrane space and 2 electrons are passed to cytochrome c. Cytochrome c1 is a catalytic core subunit containing a c-type heme. It transfers electrons from the [2Fe-2S] iron-sulfur cluster of the Rieske protein to cytochrome c. This is Cytochrome c1-1, heme protein, mitochondrial (CYCL) from Solanum tuberosum (Potato).